The sequence spans 462 residues: NEDD8-activating enzyme E1 catalytic subunit (462 aa).

The tract at residues 52-69 is interaction with ube2m N-terminus; the sequence is HPDFEASTESLQFLLDTC. ATP is bound by residues 99–123 and 147–170; these read DMDT…GRPK and IQDL…SVIA. 2 interaction with ube2m N-terminus regions span residues 156 to 160 and 191 to 216; these read RQFHI and PSSI…LPGM. The interaction with nedd8 stretch occupies residues 226–228; that stretch reads LYP. Cys236 serves as the catalytic Glycyl thioester intermediate. Interaction with nae1 regions lie at residues 241–247 and 291–294; these read MPRLPEH and FNIT. Residues 330–337 are interaction with ube2m N-terminus; that stretch reads IATSAYVP. Positions 351–356 are interaction with nedd8; sequence YTYTFE. Residues 367–462 are interaction with ube2m core domain; the sequence is SQVPQDMQFT…TVLFKLKFIS (96 aa).

Belongs to the ubiquitin-activating E1 family. UBA3 subfamily. In terms of assembly, heterodimer of uba3 and nae1. Interacts with nedd8, ube2f and ube2m.

The enzyme catalyses ATP + [NEDD8 protein] + [E1 NEDD8-activating enzyme]-L-cysteine = AMP + diphosphate + [E1 NEDD8-activating enzyme]-S-[NEDD8 protein]-yl-L-cysteine.. It functions in the pathway protein modification; protein neddylation. Functionally, catalytic subunit of the dimeric uba3-nae1 E1 enzyme. E1 activates nedd8 by first adenylating its C-terminal glycine residue with ATP, thereafter linking this residue to the side chain of the catalytic cysteine, yielding a nedd8-uba3 thioester and free AMP. E1 finally transfers nedd8 to the catalytic cysteine of ube2m. This Danio rerio (Zebrafish) protein is NEDD8-activating enzyme E1 catalytic subunit (uba3).